A 283-amino-acid chain; its full sequence is Bifunctional protein FolD (283 aa).

166-168 serves as a coordination point for NADP(+); sequence GAS.

The protein belongs to the tetrahydrofolate dehydrogenase/cyclohydrolase family. In terms of assembly, homodimer.

The enzyme catalyses (6R)-5,10-methylene-5,6,7,8-tetrahydrofolate + NADP(+) = (6R)-5,10-methenyltetrahydrofolate + NADPH. It carries out the reaction (6R)-5,10-methenyltetrahydrofolate + H2O = (6R)-10-formyltetrahydrofolate + H(+). It functions in the pathway one-carbon metabolism; tetrahydrofolate interconversion. Functionally, catalyzes the oxidation of 5,10-methylenetetrahydrofolate to 5,10-methenyltetrahydrofolate and then the hydrolysis of 5,10-methenyltetrahydrofolate to 10-formyltetrahydrofolate. The sequence is that of Bifunctional protein FolD from Coxiella burnetii (strain CbuG_Q212) (Coxiella burnetii (strain Q212)).